A 379-amino-acid chain; its full sequence is tRNA 2-selenouridine synthase (379 aa).

Residues 17–140 (FLSGAPLLDT…MRRFLIESLE (124 aa)) form the Rhodanese domain. Cysteine 100 (S-selanylcysteine intermediate) is an active-site residue.

The protein belongs to the SelU family. Monomer.

It carries out the reaction 5-methylaminomethyl-2-thiouridine(34) in tRNA + selenophosphate + (2E)-geranyl diphosphate + H2O + H(+) = 5-methylaminomethyl-2-selenouridine(34) in tRNA + (2E)-thiogeraniol + phosphate + diphosphate. The catalysed reaction is 5-methylaminomethyl-2-thiouridine(34) in tRNA + (2E)-geranyl diphosphate = 5-methylaminomethyl-S-(2E)-geranyl-thiouridine(34) in tRNA + diphosphate. It catalyses the reaction 5-methylaminomethyl-S-(2E)-geranyl-thiouridine(34) in tRNA + selenophosphate + H(+) = 5-methylaminomethyl-2-(Se-phospho)selenouridine(34) in tRNA + (2E)-thiogeraniol. The enzyme catalyses 5-methylaminomethyl-2-(Se-phospho)selenouridine(34) in tRNA + H2O = 5-methylaminomethyl-2-selenouridine(34) in tRNA + phosphate. Involved in the post-transcriptional modification of the uridine at the wobble position (U34) of tRNA(Lys), tRNA(Glu) and tRNA(Gln). Catalyzes the conversion of 2-thiouridine (S2U-RNA) to 2-selenouridine (Se2U-RNA). Acts in a two-step process involving geranylation of 2-thiouridine (S2U) to S-geranyl-2-thiouridine (geS2U) and subsequent selenation of the latter derivative to 2-selenouridine (Se2U) in the tRNA chain. The protein is tRNA 2-selenouridine synthase of Hahella chejuensis (strain KCTC 2396).